Reading from the N-terminus, the 229-residue chain is Somatolactin (229 aa).

The signal sequence occupies residues 1–21 (MAALQEVLLAVLLWPVLVTIS). 3 disulfides stabilise this stretch: C26/C36, C87/C203, and C220/C228. An N-linked (GlcNAc...) asparagine glycan is attached at N143.

This sequence belongs to the somatotropin/prolactin family. As to expression, pituitary gland.

The protein localises to the secreted. The protein is Somatolactin of Tetraodon miurus (Congo puffer).